The chain runs to 247 residues: Uridylate kinase (247 aa).

18–21 (KLSG) contacts ATP. Gly-60 is a binding site for UMP. Positions 61 and 65 each coordinate ATP. UMP-binding positions include Asp-80 and 141-148 (TGNPFFTT). ATP contacts are provided by Thr-168, Tyr-174, and Asp-177.

It belongs to the UMP kinase family. In terms of assembly, homohexamer.

It localises to the cytoplasm. The enzyme catalyses UMP + ATP = UDP + ADP. It participates in pyrimidine metabolism; CTP biosynthesis via de novo pathway; UDP from UMP (UMPK route): step 1/1. Its activity is regulated as follows. Inhibited by UTP. Functionally, catalyzes the reversible phosphorylation of UMP to UDP. The protein is Uridylate kinase of Pseudomonas savastanoi pv. phaseolicola (strain 1448A / Race 6) (Pseudomonas syringae pv. phaseolicola (strain 1448A / Race 6)).